The primary structure comprises 552 residues: Protein psiB (552 aa).

Positions 1–18 (MKLLSVLITFLLATVIYS) are cleaved as a signal peptide. N-linked (GlcNAc...) asparagine glycosylation occurs at N60. Residues 114–255 (TYDTTRNIYV…EDYCGVCQGD (142 aa)) enclose the PA14 domain. Residues N281, N313, N340, N365, N446, N472, and N521 are each glycosylated (N-linked (GlcNAc...) asparagine).

It belongs to the prespore-cell-inducing factor family.

The protein resides in the secreted. This is Protein psiB (psiB) from Dictyostelium discoideum (Social amoeba).